Here is a 294-residue protein sequence, read N- to C-terminus: Cyclin-G1 (294 aa).

This sequence belongs to the cyclin family. Cyclin G subfamily.

It localises to the nucleus. Functionally, may play a role in growth regulation. Is associated with G2/M phase arrest in response to DNA damage. May be an intermediate by which p53 mediates its role as an inhibitor of cellular proliferation. The protein is Cyclin-G1 (Ccng1) of Rattus norvegicus (Rat).